The sequence spans 187 residues: Proenkephalin-A (187 aa).

4 consecutive propeptides follow at residues 52–70 (MDEL…EILA), 80–143 (DAEE…KMLQ), 153–163 (VGRPEWWMDYQ), and 173–187 (FADS…ESYS). A disordered region spans residues 81–132 (AEEEEDALASSSDLLKELLGPGETETAAAPRGRDDEDVSKSHGGFMRALKGS). Low complexity predominate over residues 88–99 (LASSSDLLKELL). Residues 111-120 (RGRDDEDVSK) show a composition bias toward basic and acidic residues. Phosphoserine is present on serine 187.

Belongs to the opioid neuropeptide precursor family. Post-translationally, processed and degraded by ACE. In terms of processing, the N-terminal domain contains 6 conserved cysteines thought to be involved in disulfide bonding and/or processing. Proenkephalin-A is cleaved by CTSL to generate Met-enkephalin.

Its subcellular location is the cytoplasmic vesicle. The protein resides in the secretory vesicle. It localises to the chromaffin granule lumen. It is found in the secreted. In terms of biological role, neuropeptide that competes with and mimic the effects of opiate drugs. They play a role in a number of physiologic functions, including pain perception and responses to stress. In Felis catus (Cat), this protein is Proenkephalin-A (PENK).